A 163-amino-acid chain; its full sequence is NADH-quinone oxidoreductase subunit I 1 (163 aa).

4Fe-4S ferredoxin-type domains lie at 53–83 (LRRYPNGEERCIACKLCEAICPAQAITIEAG) and 94–123 (VRYDIDMVKCIYCGFCQEACPVDAIVEGPN). Residues cysteine 63, cysteine 66, cysteine 69, cysteine 73, cysteine 103, cysteine 106, cysteine 109, and cysteine 113 each coordinate [4Fe-4S] cluster.

The protein belongs to the complex I 23 kDa subunit family. In terms of assembly, NDH-1 is composed of 14 different subunits. Subunits NuoA, H, J, K, L, M, N constitute the membrane sector of the complex. It depends on [4Fe-4S] cluster as a cofactor.

Its subcellular location is the cell inner membrane. The enzyme catalyses a quinone + NADH + 5 H(+)(in) = a quinol + NAD(+) + 4 H(+)(out). Functionally, NDH-1 shuttles electrons from NADH, via FMN and iron-sulfur (Fe-S) centers, to quinones in the respiratory chain. The immediate electron acceptor for the enzyme in this species is believed to be ubiquinone. Couples the redox reaction to proton translocation (for every two electrons transferred, four hydrogen ions are translocated across the cytoplasmic membrane), and thus conserves the redox energy in a proton gradient. In Rhizobium etli (strain ATCC 51251 / DSM 11541 / JCM 21823 / NBRC 15573 / CFN 42), this protein is NADH-quinone oxidoreductase subunit I 1.